Reading from the N-terminus, the 166-residue chain is Thiol peroxidase (166 aa).

The Thioredoxin domain occupies 18–166 (LKVGDKAPDV…NYEALLKVLK (149 aa)). Cys-60 serves as the catalytic Cysteine sulfenic acid (-SOH) intermediate. Residues Cys-60 and Cys-94 are joined by a disulfide bond.

Belongs to the peroxiredoxin family. Tpx subfamily. In terms of assembly, homodimer.

It carries out the reaction a hydroperoxide + [thioredoxin]-dithiol = an alcohol + [thioredoxin]-disulfide + H2O. Thiol-specific peroxidase that catalyzes the reduction of hydrogen peroxide and organic hydroperoxides to water and alcohols, respectively. Plays a role in cell protection against oxidative stress by detoxifying peroxides. This Helicobacter pylori (strain ATCC 700392 / 26695) (Campylobacter pylori) protein is Thiol peroxidase.